The sequence spans 122 residues: Glycine cleavage system H protein (122 aa).

The Lipoyl-binding domain occupies 19–101 (TATIGITKHA…EGNSWLYKIK (83 aa)). K60 is subject to N6-lipoyllysine.

This sequence belongs to the GcvH family. In terms of assembly, the glycine cleavage system is composed of four proteins: P, T, L and H. Requires (R)-lipoate as cofactor.

The glycine cleavage system catalyzes the degradation of glycine. The H protein shuttles the methylamine group of glycine from the P protein to the T protein. The polypeptide is Glycine cleavage system H protein (Dinoroseobacter shibae (strain DSM 16493 / NCIMB 14021 / DFL 12)).